Here is a 496-residue protein sequence, read N- to C-terminus: Transmembrane protein 104 (496 aa).

At 1–10 (MAGEITETGE) the chain is on the cytoplasmic side. Residues 11 to 31 (LYSSYVGLVYMFNLIVGTGAL) form a helical membrane-spanning segment. Over 32–36 (TMPKA) the chain is Extracellular. Residues 37 to 57 (FATAGWLVSLVLLVFLGFMSF) traverse the membrane as a helical segment. Residues 58-146 (VTTTFVIEAM…SMFFNKVGVN (89 aa)) are Cytoplasmic-facing. The helical transmembrane segment at 147 to 167 (LFYFCIIVYLYGDLAIYAAAV) threads the bilayer. Residues 168-204 (PFSLMQVTCSATGNDSCGVEADTKYNDTDRCWGPLRR) are Extracellular-facing. N193 carries an N-linked (GlcNAc...) asparagine glycan. A helical transmembrane segment spans residues 205–225 (VDAYRIYLAIFTLLLGPFTFF). The Cytoplasmic portion of the chain corresponds to 226 to 233 (DVQKTKYL). The helical transmembrane segment at 234 to 254 (QILTSLMRWIAFAVMIVLALI) threads the bilayer. Residues 255-276 (RIGHGQGEGHPPLADFSGVRNL) are Extracellular-facing. A helical transmembrane segment spans residues 277–297 (FGVCVYSFMCQHSLPSLITPV). The Cytoplasmic segment spans residues 298–306 (SSKRHLTRL). The chain crosses the membrane as a helical span at residues 307–327 (VFLDYVLILAFYGLLSFTAIF). Residues 328–354 (CFRGDSLMDMYTLNFARCDVVGLAAVR) lie on the Extracellular side of the membrane. Residues 355–375 (FFLGLFPVFTISTNFPIIAVT) form a helical membrane-spanning segment. At 376–397 (LRNNWKTLFHREGGTYPWVVDR) the chain is on the cytoplasmic side. Residues 398–418 (VVFPTITLVPPVLVAFCTHDL) form a helical membrane-spanning segment. Topologically, residues 419 to 421 (ESL) are extracellular. A helical membrane pass occupies residues 422–442 (VGITGAYAGTGIQYVIPAFLV). The Cytoplasmic portion of the chain corresponds to 443–470 (YHCRRDTQLAFGCGVSNKHRSPFRHTFW). A helical transmembrane segment spans residues 471 to 491 (VGFVLLWAFSCFIFVTANIIL). The Extracellular segment spans residues 492–496 (SETKL).

The protein belongs to the TMEM104 family.

The protein resides in the membrane. The polypeptide is Transmembrane protein 104 (TMEM104) (Homo sapiens (Human)).